The following is a 354-amino-acid chain: Protein Wnt-11 (354 aa).

The signal sequence occupies residues 1–24; that stretch reads MKPSPQFFLAAFLSLILQTGICYG. Asn-40 and Asn-90 each carry an N-linked (GlcNAc...) asparagine glycan. 11 cysteine pairs are disulfide-bonded: Cys-80–Cys-91, Cys-130–Cys-138, Cys-140–Cys-157, Cys-209–Cys-223, Cys-211–Cys-218, Cys-283–Cys-314, Cys-299–Cys-309, Cys-313–Cys-353, Cys-329–Cys-344, Cys-331–Cys-341, and Cys-336–Cys-337. Ser-215 carries O-palmitoleoyl serine; by PORCN lipidation. N-linked (GlcNAc...) asparagine glycosylation is found at Asn-300 and Asn-304.

This sequence belongs to the Wnt family. In terms of processing, palmitoleoylation is required for efficient binding to frizzled receptors. Depalmitoleoylation leads to Wnt signaling pathway inhibition. Expressed in the dermatome. The expression domain is mutually exclusive to the other Wnt genes.

It localises to the secreted. Its subcellular location is the extracellular space. The protein resides in the extracellular matrix. Its function is as follows. Ligand for members of the frizzled family of seven transmembrane receptors. May play a role in the formation of dermal structure, both limb and feather buds. Is likely to signal over only few cell diameters. This is Protein Wnt-11 (WNT11) from Gallus gallus (Chicken).